The following is a 552-amino-acid chain: Polypeptide N-acetylgalactosaminyltransferase 14 (552 aa).

Over 1–6 (MRRLTR) the chain is Cytoplasmic. Residues 7–26 (RLVLPVFGVLWITVLLFFWV) traverse the membrane as a helical; Signal-anchor for type II membrane protein segment. Residues 27-552 (TKRKLEVPTG…MSQHWDMVSS (526 aa)) are Lumenal-facing. Cystine bridges form between Cys-101–Cys-328, Cys-319–Cys-397, Cys-430–Cys-449, Cys-476–Cys-493, and Cys-517–Cys-538. Residues 110 to 215 (LPPTSIIITF…RDWLQPLLHR (106 aa)) are catalytic subdomain A. The substrate site is built by Asp-151 and Arg-176. Asp-199 is a Mn(2+) binding site. Ser-200 serves as a coordination point for substrate. His-201 is a binding site for Mn(2+). The tract at residues 274 to 336 (PIRTPIIAGG…PCSRVGHVFR (63 aa)) is catalytic subdomain B. Trp-305 lines the substrate pocket. Mn(2+) is bound at residue His-333. 3 residues coordinate substrate: Arg-336, His-339, and Tyr-341. The Ricin B-type lectin domain maps to 415 to 550 (KESSIQKGNI…SLMSQHWDMV (136 aa)).

It belongs to the glycosyltransferase 2 family. GalNAc-T subfamily. It depends on Mn(2+) as a cofactor. Detected in renal tubules (at protein level). Highly expressed in fetal and adult kidney. Widely expressed at low level. Weakly expressed in whole brain, cerebellum, thymus, lung, mammary gland, liver, stomach, small intestine, colon, pancreas, spleen, bladder, uterus, placenta, testis, ovary, skeletal muscle, leukocyte, B-cell, bone marrow, fetal brain, fetal thymus, fetal lung, fetal liver, fetal small intestine, fetal spleen, fetal skeletal and fetus. Detected in renal tubules (at protein level).

Its subcellular location is the golgi apparatus membrane. The enzyme catalyses L-seryl-[protein] + UDP-N-acetyl-alpha-D-galactosamine = a 3-O-[N-acetyl-alpha-D-galactosaminyl]-L-seryl-[protein] + UDP + H(+). The catalysed reaction is L-threonyl-[protein] + UDP-N-acetyl-alpha-D-galactosamine = a 3-O-[N-acetyl-alpha-D-galactosaminyl]-L-threonyl-[protein] + UDP + H(+). Its pathway is protein modification; protein glycosylation. Its function is as follows. Catalyzes the initial reaction in O-linked oligosaccharide biosynthesis, the transfer of an N-acetyl-D-galactosamine residue to a serine or threonine residue on the protein receptor. Displays activity toward mucin-derived peptide substrates such as Muc2, Muc5AC, Muc7, and Muc13 (-58). May be involved in O-glycosylation in kidney. The polypeptide is Polypeptide N-acetylgalactosaminyltransferase 14 (GALNT14) (Homo sapiens (Human)).